We begin with the raw amino-acid sequence, 1350 residues long: Probable serine/threonine-protein kinase irlE (1350 aa).

An N-linked (GlcNAc...) asparagine glycan is attached at Asn37. The helical transmembrane segment at 149–169 (FWEILASCYGTISFIKFFNIF) threads the bilayer. Residues 731 to 802 (EAELKEKFEI…NIQQNYENQH (72 aa)) adopt a coiled-coil conformation. The segment covering 761–771 (LKKKNKLKKQK) has biased composition (basic residues). Disordered stretches follow at residues 761–795 (LKKK…QNIQ) and 807–864 (RKFN…TTNS). Over residues 772–795 (NQQQQQQAKQQAQQQKQQHQQNIQ) the composition is skewed to low complexity. Positions 809–823 (FNQQTKGRPISPSSI) are enriched in polar residues. A compositionally biased stretch (low complexity) spans 824-864 (QNQNLNPTLLQNQNQTSNPTPNLESTKKATPTTTTTTTTNS). The Protein kinase domain maps to 903 to 1166 (KKESNILGRG…LSSVLKHPLF (264 aa)). Residues 909–917 (LGRGSNGTL) and Lys932 contribute to the ATP site. Residue Asp1034 is the Proton acceptor of the active site. One can recognise a KEN domain in the interval 1169 to 1346 (SLKKIKFLES…KNSIHFSNDT (178 aa)).

The protein belongs to the protein kinase superfamily. Ser/Thr protein kinase family.

The protein resides in the membrane. It carries out the reaction L-seryl-[protein] + ATP = O-phospho-L-seryl-[protein] + ADP + H(+). It catalyses the reaction L-threonyl-[protein] + ATP = O-phospho-L-threonyl-[protein] + ADP + H(+). In Dictyostelium discoideum (Social amoeba), this protein is Probable serine/threonine-protein kinase irlE (irlE).